We begin with the raw amino-acid sequence, 272 residues long: F-actin-capping protein subunit beta (272 aa).

It belongs to the F-actin-capping protein beta subunit family. Component of the F-actin capping complex, composed of a heterodimer of an alpha and a beta subunit.

The protein localises to the cytoplasm. It is found in the cytoskeleton. In terms of biological role, F-actin-capping proteins bind in a Ca(2+)-independent manner to the fast growing ends of actin filaments (barbed end) thereby blocking the exchange of subunits at these ends. Unlike other capping proteins (such as gelsolin and severin), these proteins do not sever actin filaments. The sequence is that of F-actin-capping protein subunit beta (acpA) from Dictyostelium discoideum (Social amoeba).